The primary structure comprises 919 residues: Chaperone protein ClpC2, chloroplastic (919 aa).

A chloroplast-targeting transit peptide spans 1–54 (MAGTLLQPVALGTTFAGRVSGQRWKSHGTRRPPSMLAMSLSRPVKMAAFVGLRS). A Clp R domain is found at 89–231 (FERFTEKAIK…RTQVIRMIGE (143 aa)). Repeat regions lie at residues 92-157 (FTEK…IGRG) and 167-231 (FTPR…MIGE). Residues 252 to 499 (LEEYGTNLTK…RVRLRHAQVP (248 aa)) form an i region. 297-304 (GEPGVGKT) contributes to the ATP binding site. One can recognise a UVR domain in the interval 506–541 (DKELKQITKDKNEAVRSQDFEKAGELRDREMELKAQ). The II stretch occupies residues 566 to 757 (VNEADIQHIV…LLIMTSNVGS (192 aa)). 640-647 (GPTGVGKS) contributes to the ATP binding site.

Belongs to the ClpA/ClpB family. ClpC subfamily.

The protein resides in the plastid. The protein localises to the chloroplast. Molecular chaperone that may interact with a ClpP-like protease involved in degradation of denatured proteins in the chloroplast. The polypeptide is Chaperone protein ClpC2, chloroplastic (CLPC2) (Oryza sativa subsp. japonica (Rice)).